Reading from the N-terminus, the 243-residue chain is Proteasome subunit beta (243 aa).

2 stretches are compositionally biased toward basic and acidic residues: residues 1 to 11 and 33 to 47; these read MRTPTHDEFSG and NADR…KETK. A propeptide spans 1–49 (removed in mature form; by autocatalysis); sequence MRTPTHDEFSGRLDSLNGDRSNVFGPELGEFSNADRRADELGDKETKTG. The tract at residues 1–50 is disordered; the sequence is MRTPTHDEFSGRLDSLNGDRSNVFGPELGEFSNADRRADELGDKETKTGT. The active-site Nucleophile is the Thr-50. Ser-129 is modified (phosphoserine).

The protein belongs to the peptidase T1B family. The 20S proteasome core is composed of 14 alpha and 14 beta subunits that assemble into four stacked heptameric rings, resulting in a barrel-shaped structure. The two inner rings, each composed of seven catalytic beta subunits, are sandwiched by two outer rings, each composed of seven alpha subunits. H.volcanii produces at least 2 types of 20S proteasomes: an alpha1-beta proteasome and a proteasome containing all three subunits (alpha1, alpha2, and beta) that appears to be asymmetrical with homo-oligomeric alpha1 and alpha2 rings positioned on separate ends. The catalytic chamber with the active sites is on the inside of the barrel. Has probably a gated structure, the ends of the cylinder being occluded by the N-termini of the alpha-subunits. Is likely capped at one or both ends by the proteasome regulatory ATPase, PAN.

It is found in the cytoplasm. The catalysed reaction is Cleavage of peptide bonds with very broad specificity.. With respect to regulation, the formation of the proteasomal ATPase PAN-20S proteasome complex, via the docking of the C-termini of PAN into the intersubunit pockets in the alpha-rings, triggers opening of the gate for substrate entry. Interconversion between the open-gate and close-gate conformations leads to a dynamic regulation of the 20S proteasome proteolysis activity. In vitro, the chymotrypsin-like activity of the alpha1-beta proteasome is potently inhibited by carbobenzoxyl-leucinyl-leucinyl-leucinal-H (MG132) and significantly by N-acetyl-leucinyl-leucinyl-norleucinal-H (calpain inhibitor I). In terms of biological role, component of the proteasome core, a large protease complex with broad specificity involved in protein degradation. The H.volcanii alpha1-beta proteasome is able to cleave oligopeptides after Phe, Tyr and Trp, poorly after Glu but not after Arg. Thus, displays chymotrypsin-like activity, low caspase-like activity but no trypsin-like activity. The protein is Proteasome subunit beta of Haloferax volcanii (strain ATCC 29605 / DSM 3757 / JCM 8879 / NBRC 14742 / NCIMB 2012 / VKM B-1768 / DS2) (Halobacterium volcanii).